We begin with the raw amino-acid sequence, 428 residues long: Probable protein phosphatase 2C 12 (428 aa).

Positions 24–293 (KIDNPELIHG…DDTTCIVVDI (270 aa)) constitute a PPM-type phosphatase domain. Positions 69, 70, 245, and 284 each coordinate Mn(2+). Residues 301–331 (ASVPPPKKQGKGMLKSMFKRKTSDSSSNIEK) are disordered.

This sequence belongs to the PP2C family. Mg(2+) is required as a cofactor. Mn(2+) serves as cofactor.

The catalysed reaction is O-phospho-L-seryl-[protein] + H2O = L-seryl-[protein] + phosphate. It carries out the reaction O-phospho-L-threonyl-[protein] + H2O = L-threonyl-[protein] + phosphate. This Arabidopsis thaliana (Mouse-ear cress) protein is Probable protein phosphatase 2C 12.